The chain runs to 457 residues: Metacaspase-1 (457 aa).

The segment at 1-149 is disordered; it reads MSWNQYPGGG…PQLQGQGGQS (149 aa). Residues 7–18 show a composition bias toward gly residues; sequence PGGGHHQQGGYG. Pro residues predominate over residues 20 to 56; it reads RPPPPQWAQQGPPPPPNMGYRPPPPPQAYYNNPPPPQ. Low complexity predominate over residues 57-83; it reads QYQRPAPQQNGYQQGGYQQQQQSQGNY. Residues His-247 and Cys-303 contribute to the active site.

The protein belongs to the peptidase C14B family.

Its function is as follows. Involved in cell death (apoptosis). This Cryptococcus neoformans var. neoformans serotype D (strain JEC21 / ATCC MYA-565) (Filobasidiella neoformans) protein is Metacaspase-1 (MCA1).